Consider the following 220-residue polypeptide: Cell division protein SepF (220 aa).

The disordered stretch occupies residues 1 to 120; that stretch reads MAIKDAFNKM…RREQYQHAAH (120 aa). Residues 26 to 35 show a composition bias toward basic and acidic residues; the sequence is LSSKKQEEPV. Residues 39-79 are compositionally biased toward low complexity; the sequence is QQTSRPNQQQQAARASQPQQPKQARPQMQAQQRPQSQSRAA. A compositionally biased stretch (basic and acidic residues) spans 93–102; that stretch reads VSHDYNDRRA.

Belongs to the SepF family. Homodimer. Interacts with FtsZ.

It localises to the cytoplasm. Cell division protein that is part of the divisome complex and is recruited early to the Z-ring. Probably stimulates Z-ring formation, perhaps through the cross-linking of FtsZ protofilaments. Its function overlaps with FtsA. The sequence is that of Cell division protein SepF from Streptococcus equi subsp. equi (strain 4047).